The following is a 168-amino-acid chain: Lipoprotein signal peptidase (168 aa).

3 consecutive transmembrane segments (helical) span residues 8–28 (TLLV…VVLL), 70–90 (KYFL…YLFF), and 104–124 (VLLC…GHIV). Catalysis depends on residues Asp-125 and Asp-143. A helical transmembrane segment spans residues 134 to 154 (WAFPTFNVADVLISLGTLLLV).

Belongs to the peptidase A8 family.

The protein localises to the cell inner membrane. It carries out the reaction Release of signal peptides from bacterial membrane prolipoproteins. Hydrolyzes -Xaa-Yaa-Zaa-|-(S,diacylglyceryl)Cys-, in which Xaa is hydrophobic (preferably Leu), and Yaa (Ala or Ser) and Zaa (Gly or Ala) have small, neutral side chains.. The protein operates within protein modification; lipoprotein biosynthesis (signal peptide cleavage). In terms of biological role, this protein specifically catalyzes the removal of signal peptides from prolipoproteins. This is Lipoprotein signal peptidase from Chlamydia pneumoniae (Chlamydophila pneumoniae).